A 377-amino-acid polypeptide reads, in one-letter code: MMAAQPTANPGVRLGWKAPGALASPPRLALSRSAAAPLASHRVGRGKFSAAAITTDDYLPMRSTEVKNRTSVDGIKSLRLITAVKTPYLPDGRFDLEAYDSLINTQINGGAEGVIVGGTTGEGHLMSWDEHIMLIGHTVNCFGTNIKVIGNTGSNSTREAIHASEQGFAVGMHAALHVNPYYGKTSTAGLISHFDEVLPMGPTIIYNVPSRTGQDIPPAVIEALSTYPNMAGVKECVGHERVKCYTDKGITIWSGNDDECHDSRWKYGATGVISVTSNLVPGLMRSLMFEGENAALNEKLLPLMKWLFSEPNPIGLNTALAQLGVVRPVFRRPYAPLSLEKRTEFVRIVEAIGRENFVGQKEVRVLDDDDFVLISRY.

The transit peptide at 1 to 51 (MMAAQPTANPGVRLGWKAPGALASPPRLALSRSAAAPLASHRVGRGKFSAA) directs the protein to the chloroplast. T120 provides a ligand contact to pyruvate. The active-site Proton donor/acceptor is Y206. K234 acts as the Schiff-base intermediate with substrate in catalysis. Residue I273 participates in pyruvate binding.

This sequence belongs to the DapA family. In terms of assembly, tetramer of modified subunits derived from two genes in different combinations.

Its subcellular location is the plastid. The protein resides in the chloroplast. It carries out the reaction L-aspartate 4-semialdehyde + pyruvate = (2S,4S)-4-hydroxy-2,3,4,5-tetrahydrodipicolinate + H2O + H(+). It functions in the pathway amino-acid biosynthesis; L-lysine biosynthesis via DAP pathway; (S)-tetrahydrodipicolinate from L-aspartate: step 3/4. With respect to regulation, sensitive to lysine inhibition. This inhibition increase in an allosteric manner with increasing concentration of the inhibitor. Catalyzes the condensation of (S)-aspartate-beta-semialdehyde [(S)-ASA] and pyruvate to 4-hydroxy-tetrahydrodipicolinate (HTPA). The protein is 4-hydroxy-tetrahydrodipicolinate synthase 2, chloroplastic of Triticum aestivum (Wheat).